A 67-amino-acid chain; its full sequence is DNA-directed RNA polymerase subunit omega (67 aa).

The protein belongs to the RNA polymerase subunit omega family. In terms of assembly, the RNAP catalytic core consists of 2 alpha, 1 beta, 1 beta' and 1 omega subunit. When a sigma factor is associated with the core the holoenzyme is formed, which can initiate transcription.

It catalyses the reaction RNA(n) + a ribonucleoside 5'-triphosphate = RNA(n+1) + diphosphate. Promotes RNA polymerase assembly. Latches the N- and C-terminal regions of the beta' subunit thereby facilitating its interaction with the beta and alpha subunits. In Polaromonas naphthalenivorans (strain CJ2), this protein is DNA-directed RNA polymerase subunit omega.